The chain runs to 1123 residues: RNA-binding protein 6 (1123 aa).

Disordered stretches follow at residues 1 to 391 and 413 to 454; these read MWGD…EGGL and LPGS…EEKP. Ser17 bears the Phosphoserine mark. Lys36 is covalently cross-linked (Glycyl lysine isopeptide (Lys-Gly) (interchain with G-Cter in SUMO2)). Over residues 79 to 97 the composition is skewed to basic and acidic residues; it reads DGPHGDYRGGEGPGHDFRG. Positions 98 to 114 are enriched in low complexity; the sequence is GDFSSSDFQSRDSSQLD. Basic and acidic residues-rich tracts occupy residues 115–131 and 145–237; these read FRGR…REGP and YRGR…DFRG. The residue at position 240 (Ser240) is a Phosphoserine. 2 stretches are compositionally biased toward basic and acidic residues: residues 245 to 286 and 301 to 323; these read LDFR…REMP and QDRE…HTIE. Residue Lys331 forms a Glycyl lysine isopeptide (Lys-Gly) (interchain with G-Cter in SUMO2) linkage. The segment covering 332 to 354 has biased composition (basic and acidic residues); it reads GEFEHSETREGETQGVAFEHESP. Thr344 bears the Phosphothreonine mark. The segment covering 356 to 365 has biased composition (polar residues); it reads DFQNSQSPVQ. A phosphoserine mark is found at Ser360 and Ser362. 2 stretches are compositionally biased toward basic and acidic residues: residues 366-391 and 431-454; these read DQDK…EGGL and KTAR…EEKP. Residues Lys386, Lys453, Lys469, and Lys569 each participate in a glycyl lysine isopeptide (Lys-Gly) (interchain with G-Cter in SUMO2) cross-link. The 81-residue stretch at 456–536 folds into the RRM domain; it reads RLIRLSGVPE…KEVTLEYVSS (81 aa). Disordered stretches follow at residues 574 to 654, 741 to 787, and 827 to 948; these read TYPQ…QDGE, KRRN…QSSS, and EEEI…EEDK. Basic and acidic residues-rich tracts occupy residues 597 to 654 and 742 to 754; these read PADK…QDGE and RRND…DHMH. The span at 772-787 shows a compositional bias: polar residues; sequence SDWSSDTNRQGQQSSS. The span at 843–860 shows a compositional bias: basic and acidic residues; it reads SKKEMSKRDGKEKKDRGV. Residues Lys871, Lys879, and Lys887 each participate in a glycyl lysine isopeptide (Lys-Gly) (interchain with G-Cter in SUMO2) cross-link. Residue Ser891 is modified to Phosphoserine. A compositionally biased stretch (acidic residues) spans 910 to 922; it reads GDSDYEEEEEEEQ. The segment covering 934 to 948 has biased composition (basic and acidic residues); it reads QKREEQTKKENEEDK. Glycyl lysine isopeptide (Lys-Gly) (interchain with G-Cter in SUMO2) cross-links involve residues Lys935, Lys948, Lys991, and Lys1019. The segment covering 1004–1051 has biased composition (basic and acidic residues); sequence EREGKFKGRGNDRREKLQSFDSPERKRIKYSRETDSDRKLVDKEDIDT. Residues 1004-1106 form a disordered region; sequence EREGKFKGRG…RTSKRQSNET (103 aa). Ser1022 and Ser1025 each carry phosphoserine. Residues Lys1042, Lys1046, and Lys1066 each participate in a glycyl lysine isopeptide (Lys-Gly) (interchain with G-Cter in SUMO2) cross-link. Residues 1051-1097 enclose the G-patch domain; it reads TSSKGGCVQQATGWRKGTGLGYGHPGLASSEEAEGRMRGPSVGASGR.

May interact with FAM168B. As to expression, ubiquitous in adults.

It is found in the nucleus. Functionally, specifically binds poly(G) RNA homopolymers in vitro. This is RNA-binding protein 6 (RBM6) from Homo sapiens (Human).